The sequence spans 292 residues: Homoserine kinase (292 aa).

84-94 (PLSRGLGSSSA) contributes to the ATP binding site.

This sequence belongs to the GHMP kinase family. Homoserine kinase subfamily.

It localises to the cytoplasm. The catalysed reaction is L-homoserine + ATP = O-phospho-L-homoserine + ADP + H(+). It functions in the pathway amino-acid biosynthesis; L-threonine biosynthesis; L-threonine from L-aspartate: step 4/5. Catalyzes the ATP-dependent phosphorylation of L-homoserine to L-homoserine phosphate. The protein is Homoserine kinase of Campylobacter jejuni subsp. doylei (strain ATCC BAA-1458 / RM4099 / 269.97).